Consider the following 173-residue polypeptide: Photosystem I assembly protein Ycf3 (173 aa).

TPR repeat units follow at residues 35–68, 72–105, and 120–153; these read AFVY…EEDT, GYIL…NPRL, and GEKE…APNN.

This sequence belongs to the Ycf3 family.

It localises to the cellular thylakoid membrane. Functionally, essential for the assembly of the photosystem I (PSI) complex. May act as a chaperone-like factor to guide the assembly of the PSI subunits. The polypeptide is Photosystem I assembly protein Ycf3 (Nostoc punctiforme (strain ATCC 29133 / PCC 73102)).